The chain runs to 295 residues: Acetylglutamate kinase (295 aa).

Residues 66-67, Arg88, and Asn193 contribute to the substrate site; that span reads GG.

It belongs to the acetylglutamate kinase family. ArgB subfamily.

Its subcellular location is the cytoplasm. The catalysed reaction is N-acetyl-L-glutamate + ATP = N-acetyl-L-glutamyl 5-phosphate + ADP. It participates in amino-acid biosynthesis; L-arginine biosynthesis; N(2)-acetyl-L-ornithine from L-glutamate: step 2/4. Functionally, catalyzes the ATP-dependent phosphorylation of N-acetyl-L-glutamate. The polypeptide is Acetylglutamate kinase (Rhizobium leguminosarum bv. trifolii (strain WSM2304)).